A 748-amino-acid polypeptide reads, in one-letter code: Phosphoenolpyruvate-dependent phosphotransferase system (748 aa).

Residues 1-127 form the GAF domain; the sequence is MLTRLREIVE…RRQLLGVLVV (127 aa). Residues 128-170 are linker; that stretch reads QQRELRQYDESEESFLVTLATQMAAILSQSQLTALFGQYRQTR. The tract at residues 171–748 is PTS EI; sequence IRALPAAPGV…GMGGLIRGGL (578 aa). Catalysis depends on histidine 356, which acts as the Tele-phosphohistidine intermediate. Phosphoenolpyruvate contacts are provided by arginine 462 and arginine 498. 2 residues coordinate Mg(2+): glutamate 597 and aspartate 621. Residues 620–621 and arginine 631 each bind phosphoenolpyruvate; that span reads ND. Cysteine 668 (proton donor) is an active-site residue.

The protein belongs to the PEP-utilizing enzyme family. It depends on Mg(2+) as a cofactor.

The protein resides in the cytoplasm. It carries out the reaction L-histidyl-[protein] + phosphoenolpyruvate = N(pros)-phospho-L-histidyl-[protein] + pyruvate. Its activity is regulated as follows. Inhibited by GDP and FAD. In terms of biological role, component of the phosphoenolpyruvate-dependent nitrogen-metabolic phosphotransferase system (nitrogen-metabolic PTS), that seems to be involved in regulating nitrogen metabolism. Enzyme I-Ntr transfers the phosphoryl group from phosphoenolpyruvate (PEP) to the phosphoryl carrier protein (NPr). Could function in the transcriptional regulation of sigma-54 dependent operons in conjunction with the NPr (PtsO) and EIIA-Ntr (PtsN) proteins. Enzyme I-Ntr is specific for NPr. The protein is Phosphoenolpyruvate-dependent phosphotransferase system (ptsP) of Escherichia coli (strain K12).